The chain runs to 405 residues: Enoyl-[acyl-carrier-protein] reductase [NADH] (405 aa).

NAD(+)-binding positions include 48 to 53 (GASSGY), 74 to 75 (FE), 111 to 112 (DA), and 140 to 141 (LA). Tyrosine 226 contributes to the substrate binding site. Tyrosine 236 acts as the Proton donor in catalysis. NAD(+) is bound by residues lysine 245 and 274–276 (VVT).

The protein belongs to the TER reductase family. As to quaternary structure, monomer.

The enzyme catalyses a 2,3-saturated acyl-[ACP] + NAD(+) = a (2E)-enoyl-[ACP] + NADH + H(+). It functions in the pathway lipid metabolism; fatty acid biosynthesis. In terms of biological role, involved in the final reduction of the elongation cycle of fatty acid synthesis (FAS II). Catalyzes the reduction of a carbon-carbon double bond in an enoyl moiety that is covalently linked to an acyl carrier protein (ACP). The polypeptide is Enoyl-[acyl-carrier-protein] reductase [NADH] (Xanthomonas oryzae pv. oryzae (strain PXO99A)).